The primary structure comprises 571 residues: Proline--tRNA ligase (571 aa).

It belongs to the class-II aminoacyl-tRNA synthetase family. ProS type 1 subfamily. Homodimer.

It is found in the cytoplasm. The catalysed reaction is tRNA(Pro) + L-proline + ATP = L-prolyl-tRNA(Pro) + AMP + diphosphate. Its function is as follows. Catalyzes the attachment of proline to tRNA(Pro) in a two-step reaction: proline is first activated by ATP to form Pro-AMP and then transferred to the acceptor end of tRNA(Pro). As ProRS can inadvertently accommodate and process non-cognate amino acids such as alanine and cysteine, to avoid such errors it has two additional distinct editing activities against alanine. One activity is designated as 'pretransfer' editing and involves the tRNA(Pro)-independent hydrolysis of activated Ala-AMP. The other activity is designated 'posttransfer' editing and involves deacylation of mischarged Ala-tRNA(Pro). The misacylated Cys-tRNA(Pro) is not edited by ProRS. The protein is Proline--tRNA ligase of Acinetobacter baumannii (strain AB307-0294).